The following is a 281-amino-acid chain: Putative rRNA methyltransferase YqxC (281 aa).

The region spanning 6–67 is the S4 RNA-binding domain; that stretch reads ERLDVLLVER…NPLRYVSRGG (62 aa).

This sequence belongs to the TlyA family.

The polypeptide is Putative rRNA methyltransferase YqxC (yqxC) (Bacillus subtilis (strain 168)).